The following is a 455-amino-acid chain: Probable Xaa-Pro aminopeptidase GSTUM_00008071001 (455 aa).

Positions 251, 262, 386, and 426 each coordinate Mn(2+).

It belongs to the peptidase M24B family. The cofactor is Mn(2+).

The catalysed reaction is Release of any N-terminal amino acid, including proline, that is linked to proline, even from a dipeptide or tripeptide.. Catalyzes the removal of a penultimate prolyl residue from the N-termini of peptides. This Tuber melanosporum (strain Mel28) (Perigord black truffle) protein is Probable Xaa-Pro aminopeptidase GSTUM_00008071001.